A 97-amino-acid chain; its full sequence is UPF0223 protein lp_2149 (97 aa).

It belongs to the UPF0223 family.

In Lactiplantibacillus plantarum (strain ATCC BAA-793 / NCIMB 8826 / WCFS1) (Lactobacillus plantarum), this protein is UPF0223 protein lp_2149.